A 353-amino-acid polypeptide reads, in one-letter code: MLVSRLTARQQTILSATVRHYVRTAEPVGSKALAEQYGLSVSAATIRNAMGVLERAGLLYQPHTSAGRVPSEGGYRLYVDQLMEPDRALQRQTEQQLSQQLPDRRQSLEALLRGAAQILASLSGYLSLITFPLGLEFQVRHLQLVAIAPHQVLLIVVNDSYETQSALLTLPELDRDLEADQLDRQLLLLSNFLNQELQGRSLQALANLDWPVLGSELQSLAGILQQGLQDLEKRWQPTPATSLLVCGLADLLRQPEFNELQQVQALLELLEGEQTQLLPLMLADPAADQVRVRIGSELPLAPIRSCSLVSAFYCREQQPVGSVSLIGPTRMLYENAVAAVEATASYLSEAIAS.

This sequence belongs to the HrcA family.

Its function is as follows. Negative regulator of class I heat shock genes (grpE-dnaK-dnaJ and groELS operons). Prevents heat-shock induction of these operons. This chain is Heat-inducible transcription repressor HrcA, found in Synechococcus elongatus (strain ATCC 33912 / PCC 7942 / FACHB-805) (Anacystis nidulans R2).